A 208-amino-acid chain; its full sequence is FMN-dependent NADH:quinone oxidoreductase (208 aa).

FMN contacts are provided by residues S10, 16–18 (SRS), and 96–99 (MYNF).

This sequence belongs to the azoreductase type 1 family. As to quaternary structure, homodimer. It depends on FMN as a cofactor.

It catalyses the reaction 2 a quinone + NADH + H(+) = 2 a 1,4-benzosemiquinone + NAD(+). It carries out the reaction N,N-dimethyl-1,4-phenylenediamine + anthranilate + 2 NAD(+) = 2-(4-dimethylaminophenyl)diazenylbenzoate + 2 NADH + 2 H(+). Its function is as follows. Quinone reductase that provides resistance to thiol-specific stress caused by electrophilic quinones. In terms of biological role, also exhibits azoreductase activity. Catalyzes the reductive cleavage of the azo bond in aromatic azo compounds to the corresponding amines. The chain is FMN-dependent NADH:quinone oxidoreductase from Xanthobacter autotrophicus (strain ATCC BAA-1158 / Py2).